The following is a 709-amino-acid chain: D-(-)-3-hydroxybutyrate oligomer hydrolase (709 aa).

Residues 1–26 form the signal peptide; sequence MTVFKTAPLLIAALAASSCGGGGSGA. Residues 58–77 form a disordered region; that stretch reads GLGRSGLQDDSPPGYAGSQP. Residue Ser-305 is the Charge relay system of the active site.

The protein belongs to the D-(-)-3-hydroxybutyrate oligomer hydrolase family.

Its subcellular location is the secreted. It carries out the reaction (3R)-hydroxybutanoate dimer + H2O = 2 (R)-3-hydroxybutanoate + H(+). It participates in lipid metabolism; butanoate metabolism. Functionally, participates in the degradation of poly-3-hydroxybutyrate (PHB). It works downstream of poly(3-hydroxybutyrate) depolymerase, hydrolyzing D(-)-3-hydroxybutyrate oligomers of various length (3HB-oligomers) into 3HB-monomers. The sequence is that of D-(-)-3-hydroxybutyrate oligomer hydrolase from Paracidovorax citrulli (strain AAC00-1) (Acidovorax citrulli).